A 671-amino-acid polypeptide reads, in one-letter code: MDKAQRIRRYQQLCDELHRHSRLYYTYDRPEITDAEYDRLFRELLELEKAYPELVTAASPSLRVGASPLSQFTPVPHSRPMLSLENALTEDELYDFDARIRKLLASDAPVRYVCELKMDGVAVELVYRDGILSVGSTRGDGTTGEGITENLRTIPSIPLVLSGEAPALLEVRGEVYIDLDDFQKLNHEREEEGLQVFANPRNAAAGSLRQLDSAVTAKRPLKIFCYGIGQLSGEHPASHHSLLKCMHRWGLRVNLEHSRTLEGIEQVTDYFRQLQQRRDELPYEIDGMVVKVDDLALQRELGEKTRTPRWAIACKFPPRQAVTVVEDIVLQVGRTGAITPVAQLKPVEVSGVTVSRASLHNWDEIARLDVLIGDTVVVERAGDVIPDVVKVLTEHRNGQERSVPLPQSCPACGGPVVKLEGEVVPRCQEMSCPARLRESIKHFVARRAMDIDGLGERTIEQLLKRELIKSVADLYHLTKEDLLLCERLADKSAEKLLTAIAASKTRPLGRFLFALGIRHVGEHLASLLARQFGSLDALSHATREELLAIHEIGPQVADSVTDFFAKSRNREILAALQRAGVAPQAEEKRSGGPLTGKSFVFTGSLTRFSRKQAQEMVERLGGRASGSVSKKTDCVVAGEAAGSKLEKARQLNIQILSEEEFLQMIDTLEEA.

NAD(+) contacts are provided by residues Asp34 to Asp38, Ser83 to Leu84, and Glu115. Residue Lys117 is the N6-AMP-lysine intermediate of the active site. NAD(+)-binding residues include Arg138, Glu174, Lys291, and Lys315. Zn(2+) is bound by residues Cys409, Cys412, Cys427, and Cys432. The BRCT domain maps to Arg589–Ala671.

The protein belongs to the NAD-dependent DNA ligase family. LigA subfamily. Mg(2+) is required as a cofactor. Mn(2+) serves as cofactor.

It carries out the reaction NAD(+) + (deoxyribonucleotide)n-3'-hydroxyl + 5'-phospho-(deoxyribonucleotide)m = (deoxyribonucleotide)n+m + AMP + beta-nicotinamide D-nucleotide.. Its function is as follows. DNA ligase that catalyzes the formation of phosphodiester linkages between 5'-phosphoryl and 3'-hydroxyl groups in double-stranded DNA using NAD as a coenzyme and as the energy source for the reaction. It is essential for DNA replication and repair of damaged DNA. The chain is DNA ligase from Syntrophotalea carbinolica (strain DSM 2380 / NBRC 103641 / GraBd1) (Pelobacter carbinolicus).